We begin with the raw amino-acid sequence, 254 residues long: 2-dehydro-3-deoxy-D-gluconate 5-dehydrogenase (254 aa).

Y159 serves as the catalytic Proton acceptor.

It belongs to the short-chain dehydrogenases/reductases (SDR) family.

It carries out the reaction 2-dehydro-3-deoxy-D-gluconate + NAD(+) = 3-deoxy-D-glycero-2,5-hexodiulosonate + NADH + H(+). Functionally, involved in the degradation of 3,6-anhydro-L-galactose, which is the major monomeric sugar of red macroalgae. Catalyzes the fourth step of the pathway, the reduction of 3-deoxy-D-glycero-2,5-hexodiulosonate (L-DDGal) to 2-dehydro-3-deoxy-D-gluconate (KDG). The chain is 2-dehydro-3-deoxy-D-gluconate 5-dehydrogenase from Pseudoalteromonas atlantica (strain T6c / ATCC BAA-1087).